The following is a 994-amino-acid chain: Valine--tRNA ligase (994 aa).

The short motif at 43-53 (PNVTGTLHMGH) is the 'HIGH' region element. A disordered region spans residues 332–356 (IASGATSDTTDTPSDSDASNASNQH). Residues 333 to 353 (ASGATSDTTDTPSDSDASNAS) show a composition bias toward low complexity. The short motif at 585–589 (KMSKS) is the 'KMSKS' region element. ATP is bound at residue Lys588. The segment at 691–713 (TAHSPAQHQAGQDGQDVPRTPQP) is disordered. Residues 928–994 (LIDVDAERAR…NGLRERRTTL (67 aa)) adopt a coiled-coil conformation.

This sequence belongs to the class-I aminoacyl-tRNA synthetase family. ValS type 1 subfamily. In terms of assembly, monomer.

Its subcellular location is the cytoplasm. It carries out the reaction tRNA(Val) + L-valine + ATP = L-valyl-tRNA(Val) + AMP + diphosphate. Functionally, catalyzes the attachment of valine to tRNA(Val). As ValRS can inadvertently accommodate and process structurally similar amino acids such as threonine, to avoid such errors, it has a 'posttransfer' editing activity that hydrolyzes mischarged Thr-tRNA(Val) in a tRNA-dependent manner. This Xylella fastidiosa (strain M23) protein is Valine--tRNA ligase.